Here is a 231-residue protein sequence, read N- to C-terminus: Ribose-5-phosphate isomerase A (231 aa).

Substrate contacts are provided by residues 32–35, 85–88, and 98–101; these read TGST, DGAD, and KGGG. Glutamate 107 (proton acceptor) is an active-site residue. Lysine 125 is a binding site for substrate.

This sequence belongs to the ribose 5-phosphate isomerase family. Homodimer.

The catalysed reaction is aldehydo-D-ribose 5-phosphate = D-ribulose 5-phosphate. Its pathway is carbohydrate degradation; pentose phosphate pathway; D-ribose 5-phosphate from D-ribulose 5-phosphate (non-oxidative stage): step 1/1. In terms of biological role, catalyzes the reversible conversion of ribose-5-phosphate to ribulose 5-phosphate. This is Ribose-5-phosphate isomerase A from Paraburkholderia phytofirmans (strain DSM 17436 / LMG 22146 / PsJN) (Burkholderia phytofirmans).